The primary structure comprises 260 residues: Acetylglutamate kinase (260 aa).

Substrate is bound by residues 41–42 (GG), R63, and N156.

Belongs to the acetylglutamate kinase family. ArgB subfamily.

The protein resides in the cytoplasm. The enzyme catalyses N-acetyl-L-glutamate + ATP = N-acetyl-L-glutamyl 5-phosphate + ADP. The protein operates within amino-acid biosynthesis; L-arginine biosynthesis; N(2)-acetyl-L-ornithine from L-glutamate: step 2/4. In terms of biological role, catalyzes the ATP-dependent phosphorylation of N-acetyl-L-glutamate. In Halalkalibacterium halodurans (strain ATCC BAA-125 / DSM 18197 / FERM 7344 / JCM 9153 / C-125) (Bacillus halodurans), this protein is Acetylglutamate kinase.